Consider the following 302-residue polypeptide: Decaprenyl-phosphate phosphoribosyltransferase (302 aa).

Residue K28 participates in 5-phospho-alpha-D-ribose 1-diphosphate binding. Transmembrane regions (helical) follow at residues 30-50 (VLVLAAPLAALGGGVRYDYVE) and 55-75 (VSMAFVVFSLAASAVYLVNDV). Y70 serves as a coordination point for 5-phospho-alpha-D-ribose 1-diphosphate. N73 and D77 together coordinate Mg(2+). K87 is a 5-phospho-alpha-D-ribose 1-diphosphate binding site. The next 2 membrane-spanning stretches (helical) occupy residues 100 to 120 (WLAYTVAVVLGVTSLAGAWML) and 122 to 142 (PNLALVMVVYLAMQLAYCFGL). 5-phospho-alpha-D-ribose 1-diphosphate contacts are provided by K143 and R160. The next 2 membrane-spanning stretches (helical) occupy residues 146 to 166 (AVVEICVVSSAYLIRAIAGGV) and 170 to 190 (IPLSKWFLLIMAFGSLFMVAG). Residue K191 participates in trans,octa-cis-decaprenyl phosphate binding. 3 helical membrane passes run 218–238 (LRFVWTLSATAVVLCYGLWAF), 244–264 (SGSWFAVSMIPFTIAILRYAV), and 282–302 (RVLQLLALAWIATVGAAVAFG).

This sequence belongs to the UbiA prenyltransferase family. DPPR synthase subfamily. In terms of assembly, homotrimer. Requires Mg(2+) as cofactor.

The protein resides in the cell inner membrane. The enzyme catalyses trans,octa-cis-decaprenyl phosphate + 5-phospho-alpha-D-ribose 1-diphosphate + H(+) = trans,octa-cis-decaprenylphospho-beta-D-ribofuranose 5-phosphate + diphosphate. It participates in cell wall biogenesis; cell wall polysaccharide biosynthesis. In terms of biological role, involved in the biosynthesis of decaprenylphosphoryl arabinose (DPA) a precursor for arabinan synthesis in mycobacterial cell wall biosynthesis. Catalyzes the transfer of a 5-phosphoribosyl residue from phosphoribose diphosphate (PRPP) to decaprenyl phosphate (DP) to form decaprenylphosphoryl-5-phosphoribose (DPPR). This Mycobacterium tuberculosis (strain CDC 1551 / Oshkosh) protein is Decaprenyl-phosphate phosphoribosyltransferase.